A 245-amino-acid chain; its full sequence is Leucyl/phenylalanyl-tRNA--protein transferase (245 aa).

Belongs to the L/F-transferase family.

The protein localises to the cytoplasm. It catalyses the reaction N-terminal L-lysyl-[protein] + L-leucyl-tRNA(Leu) = N-terminal L-leucyl-L-lysyl-[protein] + tRNA(Leu) + H(+). It carries out the reaction N-terminal L-arginyl-[protein] + L-leucyl-tRNA(Leu) = N-terminal L-leucyl-L-arginyl-[protein] + tRNA(Leu) + H(+). The enzyme catalyses L-phenylalanyl-tRNA(Phe) + an N-terminal L-alpha-aminoacyl-[protein] = an N-terminal L-phenylalanyl-L-alpha-aminoacyl-[protein] + tRNA(Phe). Functions in the N-end rule pathway of protein degradation where it conjugates Leu, Phe and, less efficiently, Met from aminoacyl-tRNAs to the N-termini of proteins containing an N-terminal arginine or lysine. The polypeptide is Leucyl/phenylalanyl-tRNA--protein transferase (Paraburkholderia xenovorans (strain LB400)).